A 100-amino-acid chain; its full sequence is NADH-quinone oxidoreductase subunit K 2 (100 aa).

The next 3 helical transmembrane spans lie at 4 to 24 (LWWY…GVLI), 28 to 48 (ILVV…NFIA), and 60 to 80 (IFAI…LGIL).

Belongs to the complex I subunit 4L family. NDH-1 is composed of 14 different subunits. Subunits NuoA, H, J, K, L, M, N constitute the membrane sector of the complex.

The protein localises to the cell inner membrane. It catalyses the reaction a quinone + NADH + 5 H(+)(in) = a quinol + NAD(+) + 4 H(+)(out). Its function is as follows. NDH-1 shuttles electrons from NADH, via FMN and iron-sulfur (Fe-S) centers, to quinones in the respiratory chain. The immediate electron acceptor for the enzyme in this species is believed to be ubiquinone. Couples the redox reaction to proton translocation (for every two electrons transferred, four hydrogen ions are translocated across the cytoplasmic membrane), and thus conserves the redox energy in a proton gradient. In Rhizobium etli (strain ATCC 51251 / DSM 11541 / JCM 21823 / NBRC 15573 / CFN 42), this protein is NADH-quinone oxidoreductase subunit K 2.